Reading from the N-terminus, the 415-residue chain is 4-hydroxy-3-methylbut-2-enyl diphosphate reductase (415 aa).

Cysteine 66 serves as a coordination point for [4Fe-4S] cluster. Histidine 96 contributes to the (2E)-4-hydroxy-3-methylbut-2-enyl diphosphate binding site. Histidine 96 serves as a coordination point for dimethylallyl diphosphate. Histidine 96 lines the isopentenyl diphosphate pocket. Position 158 (cysteine 158) interacts with [4Fe-4S] cluster. Histidine 186 is a (2E)-4-hydroxy-3-methylbut-2-enyl diphosphate binding site. Histidine 186 serves as a coordination point for dimethylallyl diphosphate. Histidine 186 contacts isopentenyl diphosphate. The active-site Proton donor is glutamate 188. A (2E)-4-hydroxy-3-methylbut-2-enyl diphosphate-binding site is contributed by threonine 259. Cysteine 297 lines the [4Fe-4S] cluster pocket. (2E)-4-hydroxy-3-methylbut-2-enyl diphosphate-binding residues include serine 326, serine 327, asparagine 328, and serine 388. Dimethylallyl diphosphate-binding residues include serine 326, serine 327, asparagine 328, and serine 388. Residues serine 326, serine 327, asparagine 328, and serine 388 each contribute to the isopentenyl diphosphate site.

The protein belongs to the IspH family. The cofactor is [4Fe-4S] cluster.

It catalyses the reaction isopentenyl diphosphate + 2 oxidized [2Fe-2S]-[ferredoxin] + H2O = (2E)-4-hydroxy-3-methylbut-2-enyl diphosphate + 2 reduced [2Fe-2S]-[ferredoxin] + 2 H(+). It carries out the reaction dimethylallyl diphosphate + 2 oxidized [2Fe-2S]-[ferredoxin] + H2O = (2E)-4-hydroxy-3-methylbut-2-enyl diphosphate + 2 reduced [2Fe-2S]-[ferredoxin] + 2 H(+). It participates in isoprenoid biosynthesis; dimethylallyl diphosphate biosynthesis; dimethylallyl diphosphate from (2E)-4-hydroxy-3-methylbutenyl diphosphate: step 1/1. It functions in the pathway isoprenoid biosynthesis; isopentenyl diphosphate biosynthesis via DXP pathway; isopentenyl diphosphate from 1-deoxy-D-xylulose 5-phosphate: step 6/6. Its function is as follows. Catalyzes the conversion of 1-hydroxy-2-methyl-2-(E)-butenyl 4-diphosphate (HMBPP) into a mixture of isopentenyl diphosphate (IPP) and dimethylallyl diphosphate (DMAPP). Acts in the terminal step of the DOXP/MEP pathway for isoprenoid precursor biosynthesis. The polypeptide is 4-hydroxy-3-methylbut-2-enyl diphosphate reductase (Acaryochloris marina (strain MBIC 11017)).